The chain runs to 445 residues: ATP-dependent rRNA helicase rrp3 (445 aa).

Residues 1 to 10 (MSKNSSRDSS) are compositionally biased toward basic and acidic residues. Residues 1–28 (MSKNSSRDSSPEEVSPDTETPSTTTAPK) are disordered. The span at 17–28 (DTETPSTTTAPK) shows a compositional bias: low complexity. The Q motif motif lies at 28-56 (KTFRELGVIDSLCEACEELGYTAPTPIQE). Residues 59–229 (IPIALEGRDL…RASLSDPVRV (171 aa)) enclose the Helicase ATP-binding domain. 72-79 (AETGSGKT) provides a ligand contact to ATP. The DEAD box signature appears at 178 to 181 (DEAD). One can recognise a Helicase C-terminal domain in the interval 240–400 (KLLQSYLFIP…EYKPEKDEVM (161 aa)). The segment at 415-445 (LTMRDMQDKDNKGRGPRNRKRTRDDLDQDDG) is disordered.

Belongs to the DEAD box helicase family. DDX47/RRP3 subfamily. As to quaternary structure, interacts with the SSU processome.

Its subcellular location is the nucleus. It carries out the reaction ATP + H2O = ADP + phosphate + H(+). In terms of biological role, ATP-dependent rRNA helicase required for pre-ribosomal RNA processing. Involved in the maturation of the 35S-pre-rRNA and to its cleavage to mature 18S rRNA. This is ATP-dependent rRNA helicase rrp3 from Aspergillus terreus (strain NIH 2624 / FGSC A1156).